The following is a 215-amino-acid chain: Cytochrome c biogenesis ATP-binding export protein CcmA (215 aa).

The 208-residue stretch at 8–215 (LQATALACER…RDLDLGQWSA (208 aa)) folds into the ABC transporter domain. 40-47 (GPNGCGKT) lines the ATP pocket.

The protein belongs to the ABC transporter superfamily. CcmA exporter (TC 3.A.1.107) family. The complex is composed of two ATP-binding proteins (CcmA) and two transmembrane proteins (CcmB).

Its subcellular location is the cell inner membrane. It carries out the reaction heme b(in) + ATP + H2O = heme b(out) + ADP + phosphate + H(+). In terms of biological role, part of the ABC transporter complex CcmAB involved in the biogenesis of c-type cytochromes; once thought to export heme, this seems not to be the case, but its exact role is uncertain. Responsible for energy coupling to the transport system. The protein is Cytochrome c biogenesis ATP-binding export protein CcmA of Pseudomonas syringae pv. syringae (strain B728a).